Here is a 286-residue protein sequence, read N- to C-terminus: MPDRLAVLAQYALPKRALTTWAGKWASARLGGLTTALIRRFVARYDVNMAEAANPDMAGYASFNDFFTRALQPGARPLARADLICPVDGAISQFGRIGKDRIFQAKGHAYSTTALLGGDAAMAARFDDGHFATLYLSPRDYHRVHMPCAGELTRMVHVPGELFSVNPATACVVPGLFARNERVVCVFESAPGPGGPFALVLIGAAIVGSMATVWHGQVNPPRPGTLRQWDYAKGQVRLQQGQEMGRFLLGSTVVLLLPRGPLQFNPQWAPARPIMLGQAMAQRCAD.

Catalysis depends on charge relay system; for autoendoproteolytic cleavage activity residues Asp-88, His-145, and Ser-251. Ser-251 acts as the Schiff-base intermediate with substrate; via pyruvic acid; for decarboxylase activity in catalysis. At Ser-251 the chain carries Pyruvic acid (Ser); by autocatalysis.

It belongs to the phosphatidylserine decarboxylase family. PSD-B subfamily. Prokaryotic type I sub-subfamily. In terms of assembly, heterodimer of a large membrane-associated beta subunit and a small pyruvoyl-containing alpha subunit. It depends on pyruvate as a cofactor. Is synthesized initially as an inactive proenzyme. Formation of the active enzyme involves a self-maturation process in which the active site pyruvoyl group is generated from an internal serine residue via an autocatalytic post-translational modification. Two non-identical subunits are generated from the proenzyme in this reaction, and the pyruvate is formed at the N-terminus of the alpha chain, which is derived from the carboxyl end of the proenzyme. The autoendoproteolytic cleavage occurs by a canonical serine protease mechanism, in which the side chain hydroxyl group of the serine supplies its oxygen atom to form the C-terminus of the beta chain, while the remainder of the serine residue undergoes an oxidative deamination to produce ammonia and the pyruvoyl prosthetic group on the alpha chain. During this reaction, the Ser that is part of the protease active site of the proenzyme becomes the pyruvoyl prosthetic group, which constitutes an essential element of the active site of the mature decarboxylase.

Its subcellular location is the cell membrane. The enzyme catalyses a 1,2-diacyl-sn-glycero-3-phospho-L-serine + H(+) = a 1,2-diacyl-sn-glycero-3-phosphoethanolamine + CO2. It functions in the pathway phospholipid metabolism; phosphatidylethanolamine biosynthesis; phosphatidylethanolamine from CDP-diacylglycerol: step 2/2. Its function is as follows. Catalyzes the formation of phosphatidylethanolamine (PtdEtn) from phosphatidylserine (PtdSer). This is Phosphatidylserine decarboxylase proenzyme from Verminephrobacter eiseniae (strain EF01-2).